The primary structure comprises 505 residues: Holliday junction branch migration ATPase PINA (505 aa).

The PINc domain maps to 2-106 (NDLMLDKSAL…IVTADETQKK (105 aa)). The segment at 434–505 (PVNRGITMSN…NIKIKIKLSD (72 aa)) is KH domain. Residues 493–505 (KKNNIKIKIKLSD) form a required for maximum interaction with Hjc and Hjm region.

Homohexamer; the central pore (25-31 Angstroms) is large enough to hold dsDNA. In PDB:5F4H two of the 6 subunits are in an ATP-binding competent conformation. Interacts with Holliday junction resolvase Hjc; in the presence of HJ DNA this interaction decreases branch migration but not Y-DNA unwinding. Interacts with helicase Hjm (hel308) which decreases the DNA helicase activity of Hjm. Ca(2+) is required as a cofactor.

The enzyme catalyses ATP + H2O = ADP + phosphate + H(+). Functionally, promotes Holliday junction (HJ) branch migration and unwinds Y-shaped DNA (but not replication forks or dsDNA) in an ATP hydrolysis-dependent manner. Stimulates cleavage by HJ resolvase Hjc. Unwinds Y-shaped and 3'-flap DNA substrates. In the absence of other proteins stabilizes replication forks (prevents spontaneous unwinding); Hjc, Hjm (Hel308) and PINA coordinate HJ migration and cleavage of replication forks in a coordinated way. Inhibits the 5'-3' (but not 3'-5') helicase activity of helicase Hjm (Hel308) on overhang DNA. Probably acts as an ATP-dependent pump that pulls DNA through the hexamer. The protein is Holliday junction branch migration ATPase PINA of Saccharolobus islandicus (strain REY15A) (Sulfolobus islandicus).